Here is a 488-residue protein sequence, read N- to C-terminus: ATP synthase subunit beta (488 aa).

164–171 (GGAGVGKT) is an ATP binding site.

The protein belongs to the ATPase alpha/beta chains family. As to quaternary structure, F-type ATPases have 2 components, CF(1) - the catalytic core - and CF(0) - the membrane proton channel. CF(1) has five subunits: alpha(3), beta(3), gamma(1), delta(1), epsilon(1). CF(0) has four main subunits: a(1), b(1), b'(1) and c(9-12).

It localises to the cellular thylakoid membrane. The catalysed reaction is ATP + H2O + 4 H(+)(in) = ADP + phosphate + 5 H(+)(out). Its function is as follows. Produces ATP from ADP in the presence of a proton gradient across the membrane. The catalytic sites are hosted primarily by the beta subunits. The protein is ATP synthase subunit beta of Prochlorococcus marinus (strain MIT 9313).